The sequence spans 375 residues: Succinyl-diaminopimelate desuccinylase (375 aa).

His66 is a binding site for Zn(2+). The active site involves Asp68. Asp99 lines the Zn(2+) pocket. Residue Glu133 is the Proton acceptor of the active site. Zn(2+) is bound by residues Glu134, Glu162, and His348.

This sequence belongs to the peptidase M20A family. DapE subfamily. As to quaternary structure, homodimer. Zn(2+) serves as cofactor. Co(2+) is required as a cofactor.

The enzyme catalyses N-succinyl-(2S,6S)-2,6-diaminopimelate + H2O = (2S,6S)-2,6-diaminopimelate + succinate. The protein operates within amino-acid biosynthesis; L-lysine biosynthesis via DAP pathway; LL-2,6-diaminopimelate from (S)-tetrahydrodipicolinate (succinylase route): step 3/3. In terms of biological role, catalyzes the hydrolysis of N-succinyl-L,L-diaminopimelic acid (SDAP), forming succinate and LL-2,6-diaminopimelate (DAP), an intermediate involved in the bacterial biosynthesis of lysine and meso-diaminopimelic acid, an essential component of bacterial cell walls. This Yersinia pestis bv. Antiqua (strain Antiqua) protein is Succinyl-diaminopimelate desuccinylase.